The chain runs to 411 residues: Protein Rv3035 (411 aa).

The sequence is that of Protein Rv3035 from Mycobacterium tuberculosis (strain ATCC 25618 / H37Rv).